We begin with the raw amino-acid sequence, 251 residues long: Octanoyltransferase (251 aa).

The BPL/LPL catalytic domain occupies 56 to 241; sequence AETPDEIWIV…NLDGASAAAD (186 aa). Substrate contacts are provided by residues 96 to 103, 168 to 170, and 181 to 183; these read RGGQITYH, ALG, and GLS. Cys199 functions as the Acyl-thioester intermediate in the catalytic mechanism.

The protein belongs to the LipB family.

It is found in the cytoplasm. The catalysed reaction is octanoyl-[ACP] + L-lysyl-[protein] = N(6)-octanoyl-L-lysyl-[protein] + holo-[ACP] + H(+). It functions in the pathway protein modification; protein lipoylation via endogenous pathway; protein N(6)-(lipoyl)lysine from octanoyl-[acyl-carrier-protein]: step 1/2. In terms of biological role, catalyzes the transfer of endogenously produced octanoic acid from octanoyl-acyl-carrier-protein onto the lipoyl domains of lipoate-dependent enzymes. Lipoyl-ACP can also act as a substrate although octanoyl-ACP is likely to be the physiological substrate. This is Octanoyltransferase from Burkholderia vietnamiensis (strain G4 / LMG 22486) (Burkholderia cepacia (strain R1808)).